Reading from the N-terminus, the 703-residue chain is Fatty acid oxidation complex subunit alpha (703 aa).

Positions 1 to 190 (MSEQKAFSLN…KLGVVDACVP (190 aa)) are enoyl-CoA hydratase. A 3-hydroxyacyl-CoA dehydrogenase region spans residues 308-703 (AAVKKVGVLG…TRAGEGRTFY (396 aa)).

In the N-terminal section; belongs to the enoyl-CoA hydratase/isomerase family. This sequence in the central section; belongs to the 3-hydroxyacyl-CoA dehydrogenase family. In terms of assembly, heterotetramer of two alpha chains (FadJ) and two beta chains (FadI).

It is found in the cytoplasm. It catalyses the reaction a (3S)-3-hydroxyacyl-CoA = a (2E)-enoyl-CoA + H2O. The catalysed reaction is a 4-saturated-(3S)-3-hydroxyacyl-CoA = a (3E)-enoyl-CoA + H2O. It carries out the reaction a (3S)-3-hydroxyacyl-CoA + NAD(+) = a 3-oxoacyl-CoA + NADH + H(+). The enzyme catalyses (3S)-3-hydroxybutanoyl-CoA = (3R)-3-hydroxybutanoyl-CoA. Its pathway is lipid metabolism; fatty acid beta-oxidation. Functionally, catalyzes the formation of a hydroxyacyl-CoA by addition of water on enoyl-CoA. Also exhibits 3-hydroxyacyl-CoA epimerase and 3-hydroxyacyl-CoA dehydrogenase activities. This Vibrio parahaemolyticus serotype O3:K6 (strain RIMD 2210633) protein is Fatty acid oxidation complex subunit alpha.